The chain runs to 187 residues: Dihydrofolate reductase 2, mitochondrial (187 aa).

In terms of domain architecture, DHFR spans 4-185; that stretch reads LLNCIVAVSQ…IKYKFEVCEK (182 aa). NADP(+) contacts are provided by residues Ala10 and 16-22; that span reads GIGKNGD. Residue 31–36 participates in substrate binding; that stretch reads EFRYFQ. NADP(+) is bound at residue 55-57; the sequence is RKT. Arg71 is a binding site for substrate. NADP(+) contacts are provided by residues 77-79 and 117-124; these read SRE and GGSSVYKE.

The protein belongs to the dihydrofolate reductase family. In terms of tissue distribution, expressed in numerous cell lines.

Its subcellular location is the mitochondrion. The protein resides in the mitochondrion matrix. The protein localises to the mitochondrion inner membrane. It catalyses the reaction (6S)-5,6,7,8-tetrahydrofolate + NADP(+) = 7,8-dihydrofolate + NADPH + H(+). It functions in the pathway cofactor biosynthesis; tetrahydrofolate biosynthesis; 5,6,7,8-tetrahydrofolate from 7,8-dihydrofolate: step 1/1. Functionally, key enzyme in folate metabolism. Contributes to the de novo mitochondrial thymidylate biosynthesis pathway. Required to prevent uracil accumulation in mtDNA. Binds its own mRNA and that of DHFR. The protein is Dihydrofolate reductase 2, mitochondrial of Homo sapiens (Human).